The primary structure comprises 466 residues: MFNIDEVYTISSFLSVCNKTIENNIPTCWLQGEISNLTRPASGHWYFSLKDNTVQVRCALFRFNQRYIKFSPKNGIEVLVRVVPTLYEARGNFQLVIQQIEQIGIGNLNLAFKQLKKDLDNEGLFDNIHKKPLPNTINTIGVISSSTGAVIQDIIKVLNNRYPFVKILLFDSIVQGQDSIKKLTNALNIADQSGKCDVIIIARGGGSLEDLWAFNEEILARAIFNAKTPIISAIGHETDTTIADLVSDIRAPTPSFAAMLVTSNRLELLSNTNKLYTQLHQSYRQTLHYYQSRLNQLKLKISNPNKQIDYLNQKLDYLSINLTTRKESIFTLNNAKLNSLFTTLKQHSPIKTIKHAKSLNQMSLNQLKYQIKQIINTNNNMLYLATERLQKIIMALTNKHKARLSIQANSLHYLSPLNILARGFSITSDTKNQVLSSVTNIKINQTIITQLDNGALYSNIEKIEKN.

Belongs to the XseA family. In terms of assembly, heterooligomer composed of large and small subunits.

It is found in the cytoplasm. It carries out the reaction Exonucleolytic cleavage in either 5'- to 3'- or 3'- to 5'-direction to yield nucleoside 5'-phosphates.. Its function is as follows. Bidirectionally degrades single-stranded DNA into large acid-insoluble oligonucleotides, which are then degraded further into small acid-soluble oligonucleotides. In Vesicomyosocius okutanii subsp. Calyptogena okutanii (strain HA), this protein is Exodeoxyribonuclease 7 large subunit.